A 237-amino-acid chain; its full sequence is MFLTRTEYDRGVNTFSPEGRLFQVEYAIEAIKLGSTAIGVKTKEGVVLAVEKRITSPLLEPSSVEKIMEIDDHIGCAMSGLIADARTLVEHARVETQNHRFSYGEPMTVESTTQALCDLALRFGEGEEESMSRPFGVSLLIAGHDENGPSLYYTDPSGTFWQCNAKAIGSGSEGADSSLQEQFNKDLSLQEAETIAVSILKQVMEEKVTPNNVDIAKVAPAYHLYTPQEVEAVIARL.

Methionine 1 carries the N-acetylmethionine modification. Glycyl lysine isopeptide (Lys-Gly) (interchain with G-Cter in ubiquitin) cross-links involve residues lysine 43 and lysine 66.

This sequence belongs to the peptidase T1A family. Component of the 20S core complex of the 26S proteasome. The 26S proteasome is composed of a core protease (CP), known as the 20S proteasome, capped at one or both ends by the 19S regulatory particle (RP/PA700). The 20S proteasome core is composed of 28 subunits that are arranged in four stacked rings, resulting in a barrel-shaped structure. The two end rings are each formed by seven alpha subunits, and the two central rings are each formed by seven beta subunits. The catalytic chamber with the active sites is on the inside of the barrel.

It localises to the cytoplasm. The protein resides in the nucleus. In terms of biological role, the proteasome is a multicatalytic proteinase complex which is characterized by its ability to cleave peptides with Arg, Phe, Tyr, Leu, and Glu adjacent to the leaving group at neutral or slightly basic pH. The proteasome has an ATP-dependent proteolytic activity. This chain is Proteasome subunit alpha type-5-A (PAE1), found in Arabidopsis thaliana (Mouse-ear cress).